Consider the following 602-residue polypeptide: Proteasome-associated ATPase (602 aa).

The span at 1–17 (MSGPRSGSGSDGSTGRP) shows a compositional bias: low complexity. Positions 1-31 (MSGPRSGSGSDGSTGRPGDAESRRSAYEKET) are disordered. A compositionally biased stretch (basic and acidic residues) spans 18–31 (GDAESRRSAYEKET). A coiled-coil region spans residues 19 to 106 (DAESRRSAYE…LKEEVDRLAQ (88 aa)). Residue 289–294 (GCGKTL) coordinates ATP. The docks into pockets in the proteasome alpha-ring stretch occupies residues 601–602 (YL).

The protein belongs to the AAA ATPase family. In terms of assembly, homohexamer. Assembles into a hexameric ring structure that caps the 20S proteasome core. Strongly interacts with the prokaryotic ubiquitin-like protein Pup through a hydrophobic interface; the interacting region of ARC lies in its N-terminal coiled-coil domain. There is one Pup binding site per ARC hexamer ring. Upon ATP-binding, the C-terminus of ARC interacts with the alpha-rings of the proteasome core, possibly by binding to the intersubunit pockets.

The protein operates within protein degradation; proteasomal Pup-dependent pathway. ATPase which is responsible for recognizing, binding, unfolding and translocation of pupylated proteins into the bacterial 20S proteasome core particle. May be essential for opening the gate of the 20S proteasome via an interaction with its C-terminus, thereby allowing substrate entry and access to the site of proteolysis. Thus, the C-termini of the proteasomal ATPase may function like a 'key in a lock' to induce gate opening and therefore regulate proteolysis. This Frankia casuarinae (strain DSM 45818 / CECT 9043 / HFP020203 / CcI3) protein is Proteasome-associated ATPase.